The primary structure comprises 453 residues: Choline kinase alpha (453 aa).

The interval 22–81 is disordered; the sequence is CGGSAAPTPGVGQQRDAAGELESKQLGGRSQPLALPPPPPPPLPLPPPPSPPLADEQPEP. A compositionally biased stretch (pro residues) spans 55 to 73; it reads ALPPPPPPPLPLPPPPSPP. Residue S71 is modified to Phosphoserine. ATP contacts are provided by residues 113 to 119, R142, and 203 to 209; these read RGGLSNM and QFIPSRR. Position 115–117 (115–117) interacts with phosphocholine; that stretch reads GLS. At K243 the chain carries N6-acetyllysine. S275 bears the Phosphoserine mark. ATP is bound by residues Q304 and D326.

The protein belongs to the choline/ethanolamine kinase family. In terms of assembly, heterodimer with CHKB. Homodimer. As to quaternary structure, monomer; acetylation by KAT5 promotes dissociation of the homodimer and monomerization. Phosphorylated at Ser-275 by AMPK in response to glucose deprivation, leading to localization to lipid droplets. In terms of processing, acetylated by KAT5 at Lys-243 following phosphorylation by AMPK, leading to monomerization and conversion into a tyrosine-protein kinase. Testis, brain, lung, kidney and liver.

The protein resides in the cytoplasm. It localises to the cytosol. The protein localises to the lipid droplet. It catalyses the reaction choline + ATP = phosphocholine + ADP + H(+). The enzyme catalyses ethanolamine + ATP = phosphoethanolamine + ADP + H(+). It carries out the reaction L-tyrosyl-[protein] + ATP = O-phospho-L-tyrosyl-[protein] + ADP + H(+). Its pathway is phospholipid metabolism; phosphatidylcholine biosynthesis; phosphocholine from choline: step 1/1. The protein operates within phospholipid metabolism; phosphatidylethanolamine biosynthesis; phosphatidylethanolamine from ethanolamine: step 1/3. Its function is as follows. Plays a key role in phospholipid biosynthesis by catalyzing the phosphorylation of free choline to phosphocholine, the first step in phosphatidylcholine biosynthesis. Also phosphorylates ethanolamine, thereby contributing to phosphatidylethanolamine biosynthesis. Has higher activity with choline. Functionally, this isoform plays a key role in lipolysis of lipid droplets following glucose deprivation. In response to glucose deprivation, phosphorylated by AMPK, promoting localization to lipid droplets. Phosphorylation is followed by acetylation by KAT5, leading to dissociation of the homodimer into a monomer. Monomeric CHKA isoform 1 is converted into a tyrosine-protein kinase, which phosphorylates lipid droplet structural proteins PLIN2 and PLIN3, leading to lipolysis of lipid droplets. This is Choline kinase alpha (Chka) from Rattus norvegicus (Rat).